A 558-amino-acid polypeptide reads, in one-letter code: Phosphatase and actin regulator 3 (558 aa).

Over residues 1–11 (MAASEDGSSCL) the composition is skewed to polar residues. Disordered stretches follow at residues 1 to 69 (MAAS…KLAT), 81 to 288 (KKKN…RPLP), and 300 to 366 (LATK…ENLM). A compositionally biased stretch (low complexity) spans 18–33 (QSDPSFLSDSSATSTD). T69 is subject to Phosphothreonine. The RPEL 1 repeat unit spans residues 92–117 (SALEKKMAGRQGREELIKQGLLEMME). Over residues 94-108 (LEKKMAGRQGREELI) the composition is skewed to basic and acidic residues. Positions 144-169 (ETLTSEGAQPGSPSASGTDQVSQDEL) are enriched in polar residues. Residues 228-239 (PSPPLLPTPPPK) show a composition bias toward pro residues. At S229 the chain carries Phosphoserine. A Phosphothreonine modification is found at T235. 2 stretches are compositionally biased toward basic and acidic residues: residues 300 to 341 (LATK…RDEA) and 354 to 363 (ATKDSEENKE). RPEL repeat units follow at residues 400 to 425 (ELLA…PRRT), 438 to 463 (MKLS…KQRN), and 476 to 501 (QRLT…IRFS). Residues 449–485 (AVEELERRNILKQRNDQTEQEERREIKQRLTRKLNQR) are a coiled coil.

It belongs to the phosphatase and actin regulator family. In terms of assembly, binds PPP1CA and actin; thus inhibiting the protein phosphatase 1 (PP1) activity.

It is found in the nucleus matrix. In Mus musculus (Mouse), this protein is Phosphatase and actin regulator 3 (Phactr3).